Consider the following 126-residue polypeptide: Glycine cleavage system H protein (126 aa).

A Lipoyl-binding domain is found at 21 to 103 (TVTIGISEHA…YEGGWIVKVK (83 aa)). Lys-62 is modified (N6-lipoyllysine).

Belongs to the GcvH family. As to quaternary structure, the glycine cleavage system is composed of four proteins: P, T, L and H. It depends on (R)-lipoate as a cofactor.

In terms of biological role, the glycine cleavage system catalyzes the degradation of glycine. The H protein shuttles the methylamine group of glycine from the P protein to the T protein. This is Glycine cleavage system H protein from Vibrio vulnificus (strain CMCP6).